The chain runs to 142 residues: Large ribosomal subunit protein uL11 (142 aa).

It belongs to the universal ribosomal protein uL11 family. As to quaternary structure, part of the ribosomal stalk of the 50S ribosomal subunit. Interacts with L10 and the large rRNA to form the base of the stalk. L10 forms an elongated spine to which L12 dimers bind in a sequential fashion forming a multimeric L10(L12)X complex. In terms of processing, one or more lysine residues are methylated.

Functionally, forms part of the ribosomal stalk which helps the ribosome interact with GTP-bound translation factors. This chain is Large ribosomal subunit protein uL11, found in Hamiltonella defensa subsp. Acyrthosiphon pisum (strain 5AT).